The primary structure comprises 76 residues: UPF0346 protein OEOE_1017 (76 aa).

This sequence belongs to the UPF0346 family.

The polypeptide is UPF0346 protein OEOE_1017 (Oenococcus oeni (strain ATCC BAA-331 / PSU-1)).